We begin with the raw amino-acid sequence, 539 residues long: SAGA complex/transcription factor TFIID complex subunit TAF12 (539 aa).

Disordered regions lie at residues 1 to 28 (MSSN…TGAQ) and 86 to 129 (QQAA…RNNS). Position 2 is an N-acetylserine (S2). Composition is skewed to low complexity over residues 7-27 (NSGV…ITGA) and 87-105 (QAAQ…NPAS). Residue S129 is modified to Phosphoserine. Coiled coils occupy residues 153–202 (QNFQ…LLND) and 239–285 (LQES…QRKI). Positions 274 to 283 (QQQRQGQNQR) are enriched in low complexity. The tract at residues 274–332 (QQQRQGQNQRKISSSNSTEIPSVTGPDALKSQQQQQNTITATNNPRGNVNTSQTEQSKA) is disordered. Polar residues-rich tracts occupy residues 284–294 (KISSSNSTEIP) and 310–332 (NTIT…QSKA). S286 bears the Phosphoserine mark. The region spanning 413 to 490 (RVMSKRKLRE…HLERNWNIRI (78 aa)) is the Histone-fold domain.

Belongs to the TAF12 family. Component of the 1.8 MDa SAGA (Spt-Ada-Gcn5 acetyltransferase) complex, which is composed of 19 subunits TRA1, SPT7, TAF5, NGG1/ADA3, SGF73, SPT20/ADA5, SPT8, TAF12, TAF6, HFI1/ADA1, UBP8, GCN5, ADA2, SPT3, SGF29, TAF10, TAF9, SGF11 and SUS1. The SAGA complex is composed of 4 modules, namely the HAT (histone acetyltransferase) module (GCN5, ADA2, NGG1/ADA3 and SGF29), the DUB (deubiquitinating) module (UBP8, SGF11, SGF73 and SUS1), the core or TAF (TBP-associated factor) module (TAF5, TAF6, TAF9, TAF10 and TAF12), and the Tra1 or SPT (Suppressor of Ty) module (TRA1, HFI1/ADA1, SPT3, SPT7, SPT8 and SPT20/ADA5). The Tra1/SPT module binds activators, the core module recruits TBP (TATA-binding protein), the HAT module contains the histone H3 acetyltransferase GCN5, and the DUB module comprises the histone H2B deubiquitinase UBP8. Also identified in an altered form of SAGA, named SALSA (SAGA altered, Spt8 absent) or SLIK (SAGA-like) complex, which contains a C-terminal truncated form of SPT7 and is missing SPT8. However, it has been shown that the SAGA and SAGA-like SALSA/SLIK transcriptional coactivators are structurally and biochemically equivalent. Component of the 1.2 MDa TFIID complex, which is composed of TATA-binding protein (TBP) and the 14 TBP-associated factors (TAFs). It comprises 1 copy of each TAF1, TAF2, TAF3, TAF7, TAF8, TAF11, TAF13, 2 copies of each TAF4, TAF5, TAF6, TAF9, TAF10, TAF12, and 3 copies of TAF14. In TFIID, TAF12 heterodimerizes with TAF4, forming ultimately an octamer consisting of a TAF6-TAF9 heterotetramer core flanked by TAF4-TAF12 dimers on either side, similar to the histone H2A-H2B-H3-H4 octamer.

The protein resides in the nucleus. Functions as a component of both the DNA-binding general transcription initiation factor complex TFIID and the transcription coactivator SAGA complex. Binding of TFIID to a promoter (with or without TATA element) is the initial step in pre-initiation complex (PIC) formation. TFIID plays a key role in the regulation of gene expression by RNA polymerase II through different activities such as transcription activator interaction, core promoter recognition and selectivity, TFIIA and TFIIB interaction, chromatin modification (histone acetylation by TAF1), facilitation of DNA opening and initiation of transcription. SAGA acts as a general cofactor required for essentially all RNA polymerase II transcription. At the promoters, SAGA is required for transcription pre-initiation complex (PIC) recruitment. It influences RNA polymerase II transcriptional activity through different activities such as TBP interaction (via core/TAF module) and promoter selectivity, interaction with transcription activators (via Tra1/SPT module), and chromatin modification through histone acetylation (via HAT module) and deubiquitination (via DUB module). SAGA preferentially acetylates histones H3 (to form H3K9ac, H3K14ac, H3K18ac and H3K23ac) and H2B and deubiquitinates histone H2B. SAGA interacts with DNA via upstream activating sequences (UASs). Also identified in a modified version of SAGA named SALSA or SLIK. The cleavage of SPT7 and the absence of the SPT8 subunit in SLIK neither drive any major conformational differences in its structure compared with SAGA, nor significantly affect HAT, DUB, or DNA-binding activities. The polypeptide is SAGA complex/transcription factor TFIID complex subunit TAF12 (TAF12) (Saccharomyces cerevisiae (strain ATCC 204508 / S288c) (Baker's yeast)).